The following is a 156-amino-acid chain: Proline dehydrogenase transcriptional activator (156 aa).

Positions 10 to 71 (LDHFDLKILE…VLNPQKLGVD (62 aa)) constitute an HTH asnC-type domain. The H-T-H motif DNA-binding region spans 29 to 48 (VLQLSKRVGLSKTPCQTRLK).

Its function is as follows. Transcriptional activator of the putA gene in response to proline. This chain is Proline dehydrogenase transcriptional activator (putR), found in Rhizobium radiobacter (Agrobacterium tumefaciens).